A 456-amino-acid polypeptide reads, in one-letter code: Bifunctional protein GlmU (456 aa).

The interval 1–229 (MLNSAMSVVI…ISETDGVNNR (229 aa)) is pyrophosphorylase. UDP-N-acetyl-alpha-D-glucosamine contacts are provided by residues 11–14 (LAAG), Lys-25, Gln-76, 81–82 (GT), 103–105 (YGD), Gly-140, Glu-154, Asn-169, and Asn-227. Residue Asp-105 participates in Mg(2+) binding. Residue Asn-227 participates in Mg(2+) binding. The segment at 230 to 250 (LQLSRLERIYQAEQAEKLLLS) is linker. The tract at residues 251–456 (GVMLRDPARF…QGWQRPVKKK (206 aa)) is N-acetyltransferase. Residues Arg-333 and Lys-351 each coordinate UDP-N-acetyl-alpha-D-glucosamine. Catalysis depends on His-363, which acts as the Proton acceptor. Tyr-366 and Asn-377 together coordinate UDP-N-acetyl-alpha-D-glucosamine. Residues Ala-380, 386-387 (NY), Ser-405, Ala-423, and Arg-440 each bind acetyl-CoA.

This sequence in the N-terminal section; belongs to the N-acetylglucosamine-1-phosphate uridyltransferase family. In the C-terminal section; belongs to the transferase hexapeptide repeat family. Homotrimer. The cofactor is Mg(2+).

It is found in the cytoplasm. It catalyses the reaction alpha-D-glucosamine 1-phosphate + acetyl-CoA = N-acetyl-alpha-D-glucosamine 1-phosphate + CoA + H(+). The enzyme catalyses N-acetyl-alpha-D-glucosamine 1-phosphate + UTP + H(+) = UDP-N-acetyl-alpha-D-glucosamine + diphosphate. Its pathway is nucleotide-sugar biosynthesis; UDP-N-acetyl-alpha-D-glucosamine biosynthesis; N-acetyl-alpha-D-glucosamine 1-phosphate from alpha-D-glucosamine 6-phosphate (route II): step 2/2. It functions in the pathway nucleotide-sugar biosynthesis; UDP-N-acetyl-alpha-D-glucosamine biosynthesis; UDP-N-acetyl-alpha-D-glucosamine from N-acetyl-alpha-D-glucosamine 1-phosphate: step 1/1. It participates in bacterial outer membrane biogenesis; LPS lipid A biosynthesis. Catalyzes the last two sequential reactions in the de novo biosynthetic pathway for UDP-N-acetylglucosamine (UDP-GlcNAc). The C-terminal domain catalyzes the transfer of acetyl group from acetyl coenzyme A to glucosamine-1-phosphate (GlcN-1-P) to produce N-acetylglucosamine-1-phosphate (GlcNAc-1-P), which is converted into UDP-GlcNAc by the transfer of uridine 5-monophosphate (from uridine 5-triphosphate), a reaction catalyzed by the N-terminal domain. The protein is Bifunctional protein GlmU of Salmonella choleraesuis (strain SC-B67).